The following is a 369-amino-acid chain: F-box protein UCC1 (369 aa).

The F-box domain occupies 8-45 (LMDLPLEIHLSLLEYVPNELRAVNKYFYVLHNHSYKEK).

Component of the SCF(UCC1) E3 ubiquitin-protein ligase complex composed of CDC53, SKP1, RBX1 and UCC1. Interacts with CIT2. Monoubiquitinated by UBC4.

Its pathway is protein modification; protein ubiquitination. Substrate recognition component of the SKP1-CUL1-F-box protein E3 ubiquitin-protein ligase complex SCF(UCC1) which mediates the ubiquitination and subsequent proteasomal degradation of target proteins. The SCF(UCC1) complex acts as a metabolic switch for the glyoxylate cycle and regulates the level of CIT2 protein to maintain citrate homeostasis. The sequence is that of F-box protein UCC1 (UCC1) from Saccharomyces cerevisiae (strain ATCC 204508 / S288c) (Baker's yeast).